Here is a 464-residue protein sequence, read N- to C-terminus: Siroheme synthase (464 aa).

The tract at residues 1 to 203 (MKYLPLFHNL…GQGAEAERLL (203 aa)) is precorrin-2 dehydrogenase /sirohydrochlorin ferrochelatase. Residues 22 to 23 (EI) and 43 to 44 (PE) contribute to the NAD(+) site. The residue at position 128 (Ser-128) is a Phosphoserine. Positions 216–464 (GEVYLVGAGP…AWFEGAQGQI (249 aa)) are uroporphyrinogen-III C-methyltransferase. An S-adenosyl-L-methionine-binding site is contributed by Pro-225. The active-site Proton acceptor is the Asp-248. Lys-270 functions as the Proton donor in the catalytic mechanism. Residues 301–303 (GGD), Ile-306, 331–332 (TA), Met-383, and Gly-412 contribute to the S-adenosyl-L-methionine site.

This sequence in the N-terminal section; belongs to the precorrin-2 dehydrogenase / sirohydrochlorin ferrochelatase family. It in the C-terminal section; belongs to the precorrin methyltransferase family.

The catalysed reaction is uroporphyrinogen III + 2 S-adenosyl-L-methionine = precorrin-2 + 2 S-adenosyl-L-homocysteine + H(+). It carries out the reaction precorrin-2 + NAD(+) = sirohydrochlorin + NADH + 2 H(+). It catalyses the reaction siroheme + 2 H(+) = sirohydrochlorin + Fe(2+). It participates in cofactor biosynthesis; adenosylcobalamin biosynthesis; precorrin-2 from uroporphyrinogen III: step 1/1. The protein operates within cofactor biosynthesis; adenosylcobalamin biosynthesis; sirohydrochlorin from precorrin-2: step 1/1. It functions in the pathway porphyrin-containing compound metabolism; siroheme biosynthesis; precorrin-2 from uroporphyrinogen III: step 1/1. Its pathway is porphyrin-containing compound metabolism; siroheme biosynthesis; siroheme from sirohydrochlorin: step 1/1. It participates in porphyrin-containing compound metabolism; siroheme biosynthesis; sirohydrochlorin from precorrin-2: step 1/1. Functionally, multifunctional enzyme that catalyzes the SAM-dependent methylations of uroporphyrinogen III at position C-2 and C-7 to form precorrin-2 via precorrin-1. Then it catalyzes the NAD-dependent ring dehydrogenation of precorrin-2 to yield sirohydrochlorin. Finally, it catalyzes the ferrochelation of sirohydrochlorin to yield siroheme. The polypeptide is Siroheme synthase (Pseudomonas fluorescens (strain Pf0-1)).